A 438-amino-acid polypeptide reads, in one-letter code: Trigger factor (438 aa).

One can recognise a PPIase FKBP-type domain in the interval 160–245 (DDKVTIDFVG…VKKIQQAELP (86 aa)).

It belongs to the FKBP-type PPIase family. Tig subfamily.

Its subcellular location is the cytoplasm. It carries out the reaction [protein]-peptidylproline (omega=180) = [protein]-peptidylproline (omega=0). Functionally, involved in protein export. Acts as a chaperone by maintaining the newly synthesized protein in an open conformation. Functions as a peptidyl-prolyl cis-trans isomerase. The chain is Trigger factor from Francisella tularensis subsp. mediasiatica (strain FSC147).